The primary structure comprises 598 residues: Terpenoid synthase 1 (598 aa).

Mg(2+) contacts are provided by Asp-362, Asp-366, Asn-494, and Asp-502. A DDXXD motif motif is present at residues 362-366; it reads DDTCD.

It belongs to the terpene synthase family. Tpsa subfamily. It depends on Mg(2+) as a cofactor. Mn(2+) serves as cofactor. Expressed exclusively in siliques.

It localises to the cytoplasm. It functions in the pathway secondary metabolite biosynthesis; terpenoid biosynthesis. The chain is Terpenoid synthase 1 (TPS01) from Arabidopsis thaliana (Mouse-ear cress).